Here is an 83-residue protein sequence, read N- to C-terminus: Protein WFDC9 (83 aa).

The N-terminal stretch at 1 to 24 (MKPWIIVLTVSAHGILVFLHVLGS) is a signal peptide.

The protein resides in the secreted. This is Protein WFDC9 (Wfdc9) from Mus musculus (Mouse).